We begin with the raw amino-acid sequence, 363 residues long: Adenosine kinase (363 aa).

Mg(2+)-binding residues include A185, I188, and A191. Residue D318 is part of the active site.

Belongs to the carbohydrate kinase PfkB family. It depends on Mg(2+) as a cofactor.

The catalysed reaction is adenosine + ATP = AMP + ADP + H(+). The protein operates within purine metabolism; AMP biosynthesis via salvage pathway; AMP from adenosine: step 1/1. Functionally, ATP-dependent phosphorylation of adenosine and other related nucleoside analogs to monophosphate derivatives. It is a key purine metabolic enzyme in the opportunistic parasitic protozoan toxoplasma gondii as it cannot synthesize purines de novo. The polypeptide is Adenosine kinase (AK) (Toxoplasma gondii).